The chain runs to 253 residues: Transmembrane protein 51 (253 aa).

2 helical membrane-spanning segments follow: residues 17-37 (IGLG…VPGF) and 65-85 (VAYV…CLSI). Disordered regions lie at residues 93 to 133 (QGED…YVPS) and 164 to 253 (LTGL…RPPD). The span at 113–124 (EDSQEEEEEDEE) shows a compositional bias: acidic residues. Serine 115 bears the Phosphoserine mark. Residues 164 to 176 (LTGLDETTPTSTR) are compositionally biased toward polar residues. A phosphoserine mark is found at serine 182 and serine 192. A compositionally biased stretch (basic residues) spans 194 to 205 (LAKRLKPLKVRR). Residues 206-217 (IKSEKLHLKDFR) are compositionally biased toward basic and acidic residues. The segment covering 224–238 (NVPPPSIEPLTPPPQ) has biased composition (pro residues). The segment covering 242–253 (VQEKAPDTRPPD) has biased composition (basic and acidic residues).

The protein localises to the membrane. In Homo sapiens (Human), this protein is Transmembrane protein 51 (TMEM51).